A 355-amino-acid chain; its full sequence is Ubiquinone biosynthesis protein COQ4 homolog, mitochondrial (355 aa).

H134, D135, H138, and E150 together coordinate Zn(2+).

It belongs to the COQ4 family. In terms of assembly, component of a multi-subunit COQ enzyme complex. It depends on Zn(2+) as a cofactor.

The protein resides in the mitochondrion inner membrane. It carries out the reaction a 4-hydroxy-3-methoxy-5-(all-trans-polyprenyl)benzoate + H(+) = a 2-methoxy-6-(all-trans-polyprenyl)phenol + CO2. Its pathway is cofactor biosynthesis; ubiquinone biosynthesis. In terms of biological role, lyase that catalyzes the C1-decarboxylation of 4-hydroxy-3-methoxy-5-(all-trans-polyprenyl)benzoic acid into 2-methoxy-6-(all-trans-polyprenyl)phenol during ubiquinone biosynthesis. The sequence is that of Ubiquinone biosynthesis protein COQ4 homolog, mitochondrial from Plasmodium falciparum (isolate 3D7).